A 449-amino-acid polypeptide reads, in one-letter code: C4-dicarboxylate transport protein (449 aa).

Helical transmembrane passes span 5 to 25, 45 to 65, 77 to 97, 149 to 169, 185 to 205, 231 to 251, 298 to 318, 332 to 352, and 353 to 373; these read AVFKSLYFQVLVAIAIGVSLG, LIKMIIAPIIFCTIVVGIAGM, LAVLYFEVVSTIALVIGLIVV, GDMLQVLFFSILFGYAMHSFG, VLFGIVGVIMKVAPIGAFGAM, CVIFILGVLGSIAAFHGFSII, GYSFNLDGTSIYLTMAAVFIA, TLLVILLLTSKGAAGVTGSGF, and IVLAATLSAVGTVPVAGLALI.

Belongs to the dicarboxylate/amino acid:cation symporter (DAACS) (TC 2.A.23) family.

The protein localises to the cell inner membrane. In terms of biological role, responsible for the transport of dicarboxylates such as succinate, fumarate, and malate from the periplasm across the membrane. This is C4-dicarboxylate transport protein from Dechloromonas aromatica (strain RCB).